The primary structure comprises 188 residues: Actin-related protein 2/3 complex subunit 3 (188 aa).

This sequence belongs to the ARPC3 family. In terms of assembly, component of the Arp2/3 complex.

The protein resides in the cytoplasm. Its subcellular location is the cytoskeleton. In terms of biological role, functions as a component of the Arp2/3 complex which is involved in regulation of actin polymerization and together with an activating nucleation-promoting factor (NPF) mediates the formation of branched actin networks. The sequence is that of Actin-related protein 2/3 complex subunit 3 from Entamoeba histolytica (strain ATCC 30459 / HM-1:IMSS / ABRM).